A 130-amino-acid chain; its full sequence is Large ribosomal subunit protein bL20 (130 aa).

It belongs to the bacterial ribosomal protein bL20 family.

Binds directly to 23S ribosomal RNA and is necessary for the in vitro assembly process of the 50S ribosomal subunit. It is not involved in the protein synthesizing functions of that subunit. This chain is Large ribosomal subunit protein bL20, found in Salinispora tropica (strain ATCC BAA-916 / DSM 44818 / JCM 13857 / NBRC 105044 / CNB-440).